We begin with the raw amino-acid sequence, 89 residues long: MAKKSKIAKERKREELVNKYYELRKELKAKGDYETLRKLPRDSSPTRLTRRCKVTGRPRGVLRKFEMSRIAFREHAHKGQIPGVKKSSW.

Belongs to the universal ribosomal protein uS14 family. As to quaternary structure, part of the 30S ribosomal subunit. Contacts proteins S3 and S10.

Its function is as follows. Binds 16S rRNA, required for the assembly of 30S particles and may also be responsible for determining the conformation of the 16S rRNA at the A site. The polypeptide is Small ribosomal subunit protein uS14A (Staphylococcus aureus (strain MRSA252)).